A 161-amino-acid chain; its full sequence is Ureidoglycolate lyase (161 aa).

Belongs to the ureidoglycolate lyase family. In terms of assembly, homodimer. Ni(2+) is required as a cofactor.

It catalyses the reaction (S)-ureidoglycolate = urea + glyoxylate. It functions in the pathway nitrogen metabolism; (S)-allantoin degradation. Its function is as follows. Catalyzes the catabolism of the allantoin degradation intermediate (S)-ureidoglycolate, generating urea and glyoxylate. Involved in the utilization of allantoin as nitrogen source. The protein is Ureidoglycolate lyase of Rhodobacter capsulatus (strain ATCC BAA-309 / NBRC 16581 / SB1003).